The sequence spans 469 residues: Small ribosomal subunit protein mS29 (469 aa).

L150 is an ATP binding site.

This sequence belongs to the mitochondrion-specific ribosomal protein mS29 family. As to quaternary structure, component of the mitochondrial small ribosomal subunit (mt-SSU). Mature N.crassa 74S mitochondrial ribosomes consist of a small (37S) and a large (54S) subunit. The 37S small subunit contains a 16S ribosomal RNA (16S mt-rRNA) and 32 different proteins. The 54S large subunit contains a 23S rRNA (23S mt-rRNA) and 42 different proteins.

Its subcellular location is the mitochondrion. In terms of biological role, component of the mitochondrial ribosome (mitoribosome), a dedicated translation machinery responsible for the synthesis of mitochondrial genome-encoded proteins, including at least some of the essential transmembrane subunits of the mitochondrial respiratory chain. The mitoribosomes are attached to the mitochondrial inner membrane and translation products are cotranslationally integrated into the membrane. This Neurospora crassa (strain ATCC 24698 / 74-OR23-1A / CBS 708.71 / DSM 1257 / FGSC 987) protein is Small ribosomal subunit protein mS29 (rsm23).